Consider the following 343-residue polypeptide: UDP-3-O-acylglucosamine N-acyltransferase (343 aa).

Residue His239 is the Proton acceptor of the active site.

The protein belongs to the transferase hexapeptide repeat family. LpxD subfamily. In terms of assembly, homotrimer.

The catalysed reaction is a UDP-3-O-[(3R)-3-hydroxyacyl]-alpha-D-glucosamine + a (3R)-hydroxyacyl-[ACP] = a UDP-2-N,3-O-bis[(3R)-3-hydroxyacyl]-alpha-D-glucosamine + holo-[ACP] + H(+). Its pathway is bacterial outer membrane biogenesis; LPS lipid A biosynthesis. Functionally, catalyzes the N-acylation of UDP-3-O-acylglucosamine using 3-hydroxyacyl-ACP as the acyl donor. Is involved in the biosynthesis of lipid A, a phosphorylated glycolipid that anchors the lipopolysaccharide to the outer membrane of the cell. The protein is UDP-3-O-acylglucosamine N-acyltransferase of Vibrio vulnificus (strain YJ016).